The primary structure comprises 229 residues: Indole-3-glycerol phosphate synthase (229 aa).

It belongs to the TrpC family.

It carries out the reaction 1-(2-carboxyphenylamino)-1-deoxy-D-ribulose 5-phosphate + H(+) = (1S,2R)-1-C-(indol-3-yl)glycerol 3-phosphate + CO2 + H2O. Its pathway is amino-acid biosynthesis; L-tryptophan biosynthesis; L-tryptophan from chorismate: step 4/5. In Pyrococcus abyssi (strain GE5 / Orsay), this protein is Indole-3-glycerol phosphate synthase.